Here is a 466-residue protein sequence, read N- to C-terminus: UDP-N-acetylmuramoylalanine--D-glutamate ligase (466 aa).

115 to 121 (GTDGKTT) serves as a coordination point for ATP.

Belongs to the MurCDEF family.

It is found in the cytoplasm. It carries out the reaction UDP-N-acetyl-alpha-D-muramoyl-L-alanine + D-glutamate + ATP = UDP-N-acetyl-alpha-D-muramoyl-L-alanyl-D-glutamate + ADP + phosphate + H(+). Its pathway is cell wall biogenesis; peptidoglycan biosynthesis. Its function is as follows. Cell wall formation. Catalyzes the addition of glutamate to the nucleotide precursor UDP-N-acetylmuramoyl-L-alanine (UMA). The polypeptide is UDP-N-acetylmuramoylalanine--D-glutamate ligase (Chlorobium phaeobacteroides (strain BS1)).